We begin with the raw amino-acid sequence, 91 residues long: Translation initiation factor IF-1 (91 aa).

An S1-like domain is found at Met-1–Lys-72. The disordered stretch occupies residues Arg-70–Arg-91.

Belongs to the IF-1 family. Component of the 30S ribosomal translation pre-initiation complex which assembles on the 30S ribosome in the order IF-2 and IF-3, IF-1 and N-formylmethionyl-tRNA(fMet); mRNA recruitment can occur at any time during PIC assembly.

The protein localises to the cytoplasm. Its function is as follows. One of the essential components for the initiation of protein synthesis. Stabilizes the binding of IF-2 and IF-3 on the 30S subunit to which N-formylmethionyl-tRNA(fMet) subsequently binds. Helps modulate mRNA selection, yielding the 30S pre-initiation complex (PIC). Upon addition of the 50S ribosomal subunit IF-1, IF-2 and IF-3 are released leaving the mature 70S translation initiation complex. The protein is Translation initiation factor IF-1 of Azorhizobium caulinodans (strain ATCC 43989 / DSM 5975 / JCM 20966 / LMG 6465 / NBRC 14845 / NCIMB 13405 / ORS 571).